The sequence spans 758 residues: G-protein alpha subunit activating protein gbas-1 (758 aa).

Over residues 30–48 the composition is skewed to acidic residues; it reads LDEVDNADFEREDDEEEVL. The disordered stretch occupies residues 30 to 70; sequence LDEVDNADFEREDDEEEVLSEPSESPYTSTPKSSKRVNKTR. A compositionally biased stretch (low complexity) spans 49–61; it reads SEPSESPYTSTPK. Positions 653–666 match the GBA motif; that stretch reads ETVTVEEFLMNSYS. The tract at residues 668–690 is disordered; it reads AAPSTSTAPAPPKAPVTAPPAPQ. Pro residues predominate over residues 676-689; it reads PAPPKAPVTAPPAP.

As to quaternary structure, interacts (via GBA motif) with guanine nucleotide-binding protein G(o) subunit alpha goa-1 (in GDP-bound form); the interaction leads to activation of goa-1. In terms of tissue distribution, expressed in some neurons including the head and tail neurons, HSN and VC, in a subset of glial cells, in the distal tips cells and in the intestine.

Its function is as follows. Acts as a non-receptor guanine nucleotide exchange factor which binds to and activates G-protein alpha subunit goa-1. The chain is G-protein alpha subunit activating protein gbas-1 from Caenorhabditis elegans.